Reading from the N-terminus, the 689-residue chain is Beta-adrenergic receptor kinase 1 (689 aa).

The N-terminal stretch occupies residues 1–190; that stretch reads MADLEAVLAD…ELNIHLTMND (190 aa). Residues 54–175 enclose the RGS domain; sequence TFEKIFSQKL…IESEKFTRFC (122 aa). Residues 191–453 form the Protein kinase domain; sequence FSVHRIIGRG…AQEVKEDPFF (263 aa). ATP is bound by residues 197–205 and lysine 220; that span reads IGRGGFGEV. The active-site Proton acceptor is the aspartate 317. In terms of domain architecture, AGC-kinase C-terminal spans 454–521; sequence KAVDWQMVLL…TISERWQQEV (68 aa). A PH domain is found at 558–652; sequence DCIMHGYMSK…WKKELRDVYR (95 aa). The disordered stretch occupies residues 665 to 689; it reads KNKPRSPVVELSKMPLTQRGSANGL. Residue serine 670 is modified to Phosphoserine.

This sequence belongs to the protein kinase superfamily. AGC Ser/Thr protein kinase family. GPRK subfamily. In terms of assembly, interacts with the heterodimer formed by GNB1 and GNG2. Interacts with GIT1. Interacts with, and phosphorylates chemokine-stimulated CCR5. Interacts with ARRB1. Interacts with LPAR1 and LPAR2. Interacts with RALA in response to LPAR1 activation. ADRBK1 and RALA mutually inhibit each other's binding to LPAR1. Interacts with ADRB2.

Its subcellular location is the cytoplasm. It is found in the cell membrane. The protein localises to the postsynapse. The protein resides in the presynapse. The enzyme catalyses [beta-adrenergic receptor] + ATP = [beta-adrenergic receptor]-phosphate + ADP + H(+). With respect to regulation, in contrast to other AGC family kinases, the catalytic activity is solely regulated by the binding of substrates and ligands, not by phosphorylation of the kinase domain. Functionally, specifically phosphorylates the agonist-occupied form of the beta-adrenergic and closely related receptors, probably inducing a desensitization of them. Does not act on HTR1B/5-hydroxytryptamine 1B receptor. Key regulator of LPAR1 signaling. Competes with RALA for binding to LPAR1 thus affecting the signaling properties of the receptor. Desensitizes LPAR1 and LPAR2 in a phosphorylation-independent manner. Inhibits relaxation of airway smooth muscle in response to blue light. This is Beta-adrenergic receptor kinase 1 from Didelphis virginiana (North American opossum).